The chain runs to 397 residues: Tryptophan synthase beta chain (397 aa).

An N6-(pyridoxal phosphate)lysine modification is found at K91.

This sequence belongs to the TrpB family. Tetramer of two alpha and two beta chains. The cofactor is pyridoxal 5'-phosphate.

It carries out the reaction (1S,2R)-1-C-(indol-3-yl)glycerol 3-phosphate + L-serine = D-glyceraldehyde 3-phosphate + L-tryptophan + H2O. It functions in the pathway amino-acid biosynthesis; L-tryptophan biosynthesis; L-tryptophan from chorismate: step 5/5. Its function is as follows. The beta subunit is responsible for the synthesis of L-tryptophan from indole and L-serine. The polypeptide is Tryptophan synthase beta chain (Bacillus cereus (strain ZK / E33L)).